We begin with the raw amino-acid sequence, 379 residues long: Zinc metalloproteinase nas-20 (379 aa).

Residues M1–S20 form the signal peptide. The propeptide occupies D21–R29. The Peptidase M12A domain maps to Q30 to N208. An N-linked (GlcNAc...) asparagine glycan is attached at N67. Cystine bridges form between C70/C207, C91/C111, C209/C229, and C234/C243. H119 lines the Zn(2+) pocket. E120 is an active-site residue. Zn(2+) is bound by residues H123 and H129. N-linked (GlcNAc...) asparagine glycosylation is present at N185. In terms of domain architecture, EGF-like spans K203–D244. Residues N337 and N370 are each glycosylated (N-linked (GlcNAc...) asparagine).

Requires Zn(2+) as cofactor.

It is found in the secreted. Metalloprotease. This Caenorhabditis elegans protein is Zinc metalloproteinase nas-20 (nas-20).